A 2563-amino-acid polypeptide reads, in one-letter code: Compactin diketide synthase mlcB (2563 aa).

A Ketosynthase family 3 (KS3) domain is found at 29–450; that stretch reads STPIAIVGMG…GSNAHVILES (422 aa). Catalysis depends on for beta-ketoacyl synthase activity residues Cys202, His337, and His372. Residues 568–915 form an acyl and malonyl transferase region; it reads VFTGQGAQWH…TELISKGYGL (348 aa). The active-site For malonyltransferase activity is the Ser658. The segment covering 951-960 has biased composition (basic and acidic residues); the sequence is EPRGSRESKQ. Positions 951 to 971 are disordered; that stretch reads EPRGSRESKQRTHPPHTLIGS. Residues 966 to 1103 are N-terminal hotdog fold; the sequence is HTLIGSRESL…GLIRSESERS (138 aa). In terms of domain architecture, PKS/mFAS DH spans 966-1284; that stretch reads HTLIGSRESL…FQSVGSSFSD (319 aa). Catalysis depends on His998, which acts as the Proton acceptor; for dehydratase activity. The segment at 998-1010 is dehydratase-like; the sequence is HVVGSSIIFPGAG. The interval 1121-1284 is C-terminal hotdog fold; it reads DNRSIDPNDL…FQSVGSSFSD (164 aa). Asp1187 serves as the catalytic Proton donor; for dehydratase activity. The methyltransferase stretch occupies residues 1542–1579; the sequence is YDVVVACQVLHATRCMKRTLSNVRKLLKPGGNLILVET. A Carrier domain is found at 2485 to 2562; that stretch reads EAISIVLKAM…GLVELVVAKC (78 aa). The residue at position 2522 (Ser2522) is an O-(pantetheine 4'-phosphoryl)serine.

Requires pantetheine 4'-phosphate as cofactor.

It catalyses the reaction holo-[2-methylbutanoate polyketide synthase] + 2 malonyl-CoA + S-adenosyl-L-methionine + 2 NADPH + 3 H(+) = (S)-2-methylbutanoyl-[2-methylbutanoate polyketide synthase] + S-adenosyl-L-homocysteine + 2 CO2 + 2 NADP(+) + 2 CoA + H2O. It participates in polyketide biosynthesis. Diketide synthase; part of the gene cluster that mediates the biosynthesis of compactin, also known as mevastatin or ML-236B, and which acts as a potent competitive inhibitor of HMG-CoA reductase. Compactin biosynthesis is performed in two stages. The first stage is catalyzed by the nonaketide synthase mlcA, which belongs to type I polyketide synthases and catalyzes the iterative nine-step formation of the polyketide. This PKS stage is completed by the action of dehydrogenase mlcG, which catalyzes the NADPH-dependent reduction of the unsaturated tetra-, penta- and heptaketide intermediates that arise during the mlcA-mediated biosynthesis of the nonaketide chain and leads to dihydro-ML-236C carboxylate. Covalently bound dihydro-ML-236C carboxylate is released from mlcA by the mlcF esterase. Conversion of dihydro-ML-236C carboxylate into ML-236A carboxylate is subsequently performed with the participation of molecular oxygen and P450 monoogygenase mlcC. Finally, mlcH performs the conversion of ML-236A carboxylate to ML-236B/compactin carboxylate through the addition of the side-chain diketide moiety produced by the diketide synthase mlcB. The protein is Compactin diketide synthase mlcB (mlcB) of Penicillium citrinum.